The sequence spans 151 residues: 3-dehydroquinate dehydratase 1 (151 aa).

Tyr23 functions as the Proton acceptor in the catalytic mechanism. Substrate-binding residues include Asn75, His81, and Asp88. His101 functions as the Proton donor in the catalytic mechanism. Substrate contacts are provided by residues 102–103 (LS) and Arg112.

It belongs to the type-II 3-dehydroquinase family. In terms of assembly, homododecamer.

It catalyses the reaction 3-dehydroquinate = 3-dehydroshikimate + H2O. It participates in metabolic intermediate biosynthesis; chorismate biosynthesis; chorismate from D-erythrose 4-phosphate and phosphoenolpyruvate: step 3/7. Functionally, catalyzes a trans-dehydration via an enolate intermediate. This is 3-dehydroquinate dehydratase 1 (aroQ1) from Pseudomonas putida (strain ATCC 47054 / DSM 6125 / CFBP 8728 / NCIMB 11950 / KT2440).